The primary structure comprises 414 residues: Probable acetyl-CoA acetyltransferase (414 aa).

Cys110 acts as the Acyl-thioester intermediate in catalysis. Residues Tyr205, 244–246 (KVL), and Lys249 contribute to the CoA site. Residue Tyr205 coordinates K(+). Ala266 and Ala268 together coordinate K(+). Ser269 contacts CoA. Val366 lines the K(+) pocket. Residues His370 and Cys400 each act as proton acceptor in the active site.

Belongs to the thiolase-like superfamily. Thiolase family.

It catalyses the reaction 2 acetyl-CoA = acetoacetyl-CoA + CoA. The protein is Probable acetyl-CoA acetyltransferase of Dictyostelium discoideum (Social amoeba).